Reading from the N-terminus, the 383-residue chain is Succinyl-diaminopimelate desuccinylase (383 aa).

H79 provides a ligand contact to Zn(2+). D81 is a catalytic residue. D110 contributes to the Zn(2+) binding site. The active-site Proton acceptor is E141. 3 residues coordinate Zn(2+): E142, E170, and H355.

It belongs to the peptidase M20A family. DapE subfamily. In terms of assembly, homodimer. It depends on Zn(2+) as a cofactor. Requires Co(2+) as cofactor.

It catalyses the reaction N-succinyl-(2S,6S)-2,6-diaminopimelate + H2O = (2S,6S)-2,6-diaminopimelate + succinate. It functions in the pathway amino-acid biosynthesis; L-lysine biosynthesis via DAP pathway; LL-2,6-diaminopimelate from (S)-tetrahydrodipicolinate (succinylase route): step 3/3. In terms of biological role, catalyzes the hydrolysis of N-succinyl-L,L-diaminopimelic acid (SDAP), forming succinate and LL-2,6-diaminopimelate (DAP), an intermediate involved in the bacterial biosynthesis of lysine and meso-diaminopimelic acid, an essential component of bacterial cell walls. The protein is Succinyl-diaminopimelate desuccinylase of Helicobacter pylori (strain ATCC 700392 / 26695) (Campylobacter pylori).